The sequence spans 132 residues: Holo-[acyl-carrier-protein] synthase (132 aa).

2 residues coordinate Mg(2+): Asp8 and Glu64.

This sequence belongs to the P-Pant transferase superfamily. AcpS family. Mg(2+) is required as a cofactor.

The protein resides in the cytoplasm. It carries out the reaction apo-[ACP] + CoA = holo-[ACP] + adenosine 3',5'-bisphosphate + H(+). Functionally, transfers the 4'-phosphopantetheine moiety from coenzyme A to a Ser of acyl-carrier-protein. This chain is Holo-[acyl-carrier-protein] synthase, found in Shewanella sediminis (strain HAW-EB3).